The chain runs to 404 residues: Putative gustatory receptor 94a (404 aa).

Topologically, residues 1 to 11 (MDFTSDYAHRR) are cytoplasmic. The helical transmembrane segment at 12-32 (MVKFLTIILIGFMTVFGLLAN) threads the bilayer. The Extracellular segment spans residues 33-43 (RYRAGRRERFR). Residues 44-64 (FSKANLAFASLWAIAFSLVYG) form a helical membrane-spanning segment. The Cytoplasmic segment spans residues 65-133 (RQIYKEYQEG…RLDSRSLYIS (69 aa)). Residues 134 to 154 (IVLALVKTVAFPLTIEVAFIL) traverse the membrane as a helical segment. At 155-171 (QQRRQHPEMSLIWTLYR) the chain is on the extracellular side. The helical transmembrane segment at 172–192 (LFPLIISNFLNNCYFGAMVVV) threads the bilayer. Over 193–260 (KEILYALNRR…HSGKYLTPMS (68 aa)) the chain is Cytoplasmic. Residues 261-281 (LSMILSLICHLLGITVGFYSL) traverse the membrane as a helical segment. Residues 282-296 (YYAIADTLIMGKPYD) lie on the Extracellular side of the membrane. A helical transmembrane segment spans residues 297–317 (GLGSLINLVFLSISLAEITLL). Residues 318 to 376 (THLCNHLLVATRRSAVILQEMNLQHADSRYRQAVHGFTLLVTVTKYQIKPLGLYELDMR) are Cytoplasmic-facing. Residues 377–397 (LISNVFSAVASFLLILVQADL) traverse the membrane as a helical segment. Residues 398-404 (SQRFKMQ) are Extracellular-facing.

This sequence belongs to the insect chemoreceptor superfamily. Gustatory receptor (GR) family. Gr22e subfamily. In larvae, is expressed in neurons of the terminal external chemosensory organ.

It localises to the cell membrane. Its function is as follows. Probable gustatory receptor which mediates acceptance or avoidance behavior, depending on its substrates. This chain is Putative gustatory receptor 94a (Gr94a), found in Drosophila melanogaster (Fruit fly).